Consider the following 426-residue polypeptide: Limonoid 21-O-acetyltransferse (426 aa).

Residues His152 and Asp365 each act as proton acceptor in the active site.

The protein belongs to the plant acyltransferase family. In terms of assembly, monomer. As to expression, expressed in maturing fruits and in juice vesicles.

It catalyses the reaction isomeliandiol + acetyl-CoA = 21-O-acetyl-isomeliandiol + CoA. The protein operates within secondary metabolite biosynthesis; terpenoid biosynthesis. Its function is as follows. Acetyltransferase involved in the biosynthesis of limonoids triterpene natural products such as limonin, a compound with insecticidal activity responsible for the bitter taste in citrus. Catalyzes the formation of 21-O-acetyl-isomeliandiol from isomeliandiol. This Citrus sinensis (Sweet orange) protein is Limonoid 21-O-acetyltransferse.